The primary structure comprises 413 residues: MKTYLVGGSVRDEILGLPVTDHDYVVVGVSPEEMVHLGFRPVGKDFPVFLHPQSQEQYALARTERKVSRGYKGFEVYASPEVTLQEDLARRDLTINAIAKDEYGNIIDPFGGIADLEAGVLRHIGPAFTEDPVRVLRTARFAARFGFHIAPETLALMNEMVHNGEVDALVSERVWQEIARGLMERHPSRMFYALRDCGALTRIMPEVDALFGVPQPPQHHPEIDTGVHVMMVIDYAASRNYSLQVRFAALTHDLGKGTTPPEEWPRHIGHEARSVRLVQGLCERINPPNEMRNLALLVARYHGDVHRAAELRPVTIANLLQGVDAYRKPERFEEFLQACACDFHGRPGYATRPYPQADRLREAFQAARSVDAGAIAKEMARNVSDPSRLPVAINTRVSETRIAEIRNRLGSLA.

ATP contacts are provided by glycine 8 and arginine 11. CTP is bound by residues glycine 8 and arginine 11. 2 residues coordinate Mg(2+): aspartate 21 and aspartate 23. 3 residues coordinate ATP: arginine 91, arginine 137, and arginine 140. Positions 91, 137, and 140 each coordinate CTP. Residues 225–326 (TGVHVMMVID…ANLLQGVDAY (102 aa)) enclose the HD domain.

The protein belongs to the tRNA nucleotidyltransferase/poly(A) polymerase family. Bacterial CCA-adding enzyme type 1 subfamily. As to quaternary structure, monomer. Can also form homodimers and oligomers. The cofactor is Mg(2+). Ni(2+) serves as cofactor.

It catalyses the reaction a tRNA precursor + 2 CTP + ATP = a tRNA with a 3' CCA end + 3 diphosphate. The enzyme catalyses a tRNA with a 3' CCA end + 2 CTP + ATP = a tRNA with a 3' CCACCA end + 3 diphosphate. Its function is as follows. Catalyzes the addition and repair of the essential 3'-terminal CCA sequence in tRNAs without using a nucleic acid template. Adds these three nucleotides in the order of C, C, and A to the tRNA nucleotide-73, using CTP and ATP as substrates and producing inorganic pyrophosphate. tRNA 3'-terminal CCA addition is required both for tRNA processing and repair. Also involved in tRNA surveillance by mediating tandem CCA addition to generate a CCACCA at the 3' terminus of unstable tRNAs. While stable tRNAs receive only 3'-terminal CCA, unstable tRNAs are marked with CCACCA and rapidly degraded. This is Multifunctional CCA protein from Nitrosospira multiformis (strain ATCC 25196 / NCIMB 11849 / C 71).